The chain runs to 279 residues: Phosphatidylglycerol--prolipoprotein diacylglyceryl transferase (279 aa).

The next 3 membrane-spanning stretches (helical) occupy residues 22-42 (WYGIIIACGILLGYFIAQAAL), 52-72 (LIDIIFYSAIVGFIVARIYFV), and 89-109 (IWHGGIAIHGGLIGGLISGII). Residue Arg137 coordinates a 1,2-diacyl-sn-glycero-3-phospho-(1'-sn-glycerol). 2 consecutive transmembrane segments (helical) span residues 203–223 (LGETFFGYLIWYSVGRFFVEA) and 235–255 (IRVAQLVSVVLIMISVIFVIY).

This sequence belongs to the Lgt family.

It localises to the cell membrane. It catalyses the reaction L-cysteinyl-[prolipoprotein] + a 1,2-diacyl-sn-glycero-3-phospho-(1'-sn-glycerol) = an S-1,2-diacyl-sn-glyceryl-L-cysteinyl-[prolipoprotein] + sn-glycerol 1-phosphate + H(+). Its pathway is protein modification; lipoprotein biosynthesis (diacylglyceryl transfer). Its function is as follows. Catalyzes the transfer of the diacylglyceryl group from phosphatidylglycerol to the sulfhydryl group of the N-terminal cysteine of a prolipoprotein, the first step in the formation of mature lipoproteins. The protein is Phosphatidylglycerol--prolipoprotein diacylglyceryl transferase of Staphylococcus epidermidis (strain ATCC 35984 / DSM 28319 / BCRC 17069 / CCUG 31568 / BM 3577 / RP62A).